The following is a 269-amino-acid chain: Myelin protein zero-like protein 1 (269 aa).

The signal sequence occupies residues 1–35 (MAASAGAGAVIAAPDSRRWLWSVLAAALGLLTAGV). An Ig-like V-type domain is found at 36–146 (SALEVYTPKE…VKNPPDIVVQ (111 aa)). Topologically, residues 36-162 (SALEVYTPKE…YVVEKENLPV (127 aa)) are extracellular. Residues asparagine 50 and asparagine 130 are each glycosylated (N-linked (GlcNAc...) asparagine). Cysteine 58 and cysteine 135 are disulfide-bonded. The chain crosses the membrane as a helical span at residues 163–183 (FPVWVVVGIVTAVVLGLTLLI). Topologically, residues 184–269 (SMILAVLYRR…SVVYADIRKN (86 aa)) are cytoplasmic. The segment at 199 to 238 (DYTGCSTSESLSPVKQAPRKSPSDTEGLVKSLPSGSHQGP) is disordered. The span at 202–211 (GCSTSESLSP) shows a compositional bias: polar residues. 6 positions are modified to phosphoserine: serine 204, serine 206, serine 208, serine 210, serine 219, and serine 221. An ITIM motif 1 motif is present at residues 239 to 244 (VIYAQL). Tyrosine 241 carries the phosphotyrosine modification. Residue serine 260 is modified to Phosphoserine. Residues 261-266 (VVYADI) carry the ITIM motif 2 motif. At tyrosine 263 the chain carries Phosphotyrosine.

It belongs to the myelin P0 protein family. Interacts with phosphorylated PTPN11/SHP-2. In terms of processing, phosphorylated on tyrosine residues upon stimulation with pervanadate and concanavalin-A (ConA). Phosphorylation at Tyr-241 and Tyr-263 is required for interaction with PTPN11/SHP-2. Dephosphorylated by PTPN11/SHP-2 (in vitro). Post-translationally, N-glycosylated. N-glycosylation is required for concanavalin A binding. As to expression, widely expressed with highest levels in heart, placenta, kidney and pancreas. Isoform 3 is relatively abundant in hematopoietic tissues and fetal liver. Isoform 1 and isoform 3 are expressed in CD14- PB monocytes and pre-B cell progenitors. Isoform 3 appears to be the major isoform in CD34- promyelocytic and promonocytic cells. During differentiation in monocytic cells, the expression level of isoform 3 decreases and that of isoform 1 increases. Isoform 1 is prominent in stromal cells and, to a lesser extent, in umbilical vein endothelial cells and erythroid progenitors. Isoform 2 is expressed in a erythroid progenitor cell line.

Its subcellular location is the membrane. Its function is as follows. Cell surface receptor, which is involved in signal transduction processes. Recruits PTPN11/SHP-2 to the cell membrane and is a putative substrate of PTPN11/SHP-2. Is a major receptor for concanavalin-A (ConA) and is involved in cellular signaling induced by ConA, which probably includes Src family tyrosine-protein kinases. Isoform 3 seems to have a dominant negative role; it blocks tyrosine phosphorylation of MPZL1 induced by ConA. Isoform 1, but not isoform 2 and isoform 3, may be involved in regulation of integrin-mediated cell motility. In Homo sapiens (Human), this protein is Myelin protein zero-like protein 1 (MPZL1).